A 101-amino-acid polypeptide reads, in one-letter code: Urease subunit beta (101 aa).

The protein belongs to the urease beta subunit family. In terms of assembly, heterotrimer of UreA (gamma), UreB (beta) and UreC (alpha) subunits. Three heterotrimers associate to form the active enzyme.

The protein localises to the cytoplasm. The enzyme catalyses urea + 2 H2O + H(+) = hydrogencarbonate + 2 NH4(+). Its pathway is nitrogen metabolism; urea degradation; CO(2) and NH(3) from urea (urease route): step 1/1. This is Urease subunit beta from Pseudomonas fluorescens (strain ATCC BAA-477 / NRRL B-23932 / Pf-5).